A 359-amino-acid chain; its full sequence is 4-galactosyl-N-acetylglucosaminide 3-alpha-L-fucosyltransferase 9 (359 aa).

Topologically, residues 1–11 (MTSASKGILRP) are cytoplasmic. The helical; Signal-anchor for type II membrane protein transmembrane segment at 12–32 (FLIVCIILGCFMACLLIYIKP) threads the bilayer. Topologically, residues 33–359 (TNSWIFSPME…VGNLEKWFWN (327 aa)) are lumenal. Asparagine 62 carries an N-linked (GlcNAc...) asparagine glycan. Residues 63-168 (ETTILIWVWP…RRDSDIQVPY (106 aa)) form an acceptor-binding region. Glutamine 75 is a binding site for a beta-D-galactosyl-(1-&gt;4)-N-acetyl-beta-D-glucosaminyl derivative. 3 disulfide bridges follow: cysteine 82/cysteine 335, cysteine 91/cysteine 338, and cysteine 190/cysteine 238. Asparagine 101 carries an N-linked (GlcNAc...) asparagine glycan. Glutamate 137 lines the a beta-D-galactosyl-(1-&gt;4)-N-acetyl-beta-D-glucosaminyl derivative pocket. The active-site Nucleophile is glutamate 137. Glutamate 137 contributes to the GDP-beta-L-fucose binding site. Residue asparagine 153 is glycosylated (N-linked (GlcNAc...) asparagine). GDP-beta-L-fucose-binding residues include tyrosine 168, valine 192, serine 194, asparagine 195, arginine 202, valine 226, tyrosine 241, asparagine 246, tyrosine 252, glutamate 255, and lysine 256. The segment at 169 to 326 (GFLTVSTNPF…NWRKDFTVNL (158 aa)) is donor-binding. An acceptor-binding region spans residues 327–359 (PRFWESHACLACDHVKRHQEYKSVGNLEKWFWN).

The protein belongs to the glycosyltransferase 10 family. In terms of assembly, homodimer. In terms of processing, N-glycosylated with complex-type N-glycans.

The protein resides in the golgi apparatus. It is found in the trans-Golgi network membrane. The protein localises to the golgi apparatus membrane. It catalyses the reaction a beta-D-galactosyl-(1-&gt;4)-N-acetyl-beta-D-glucosaminyl derivative + GDP-beta-L-fucose = a beta-D-galactosyl-(1-&gt;4)-[alpha-L-fucosyl-(1-&gt;3)]-N-acetyl-beta-D-glucosaminyl derivative + GDP + H(+). It carries out the reaction an alpha-Neu5Ac-(2-&gt;3)-beta-D-Gal-(1-&gt;4)-beta-D-GlcNAc-(1-&gt;3)-beta-D-Gal-(1-&gt;4)-beta-D-GlcNAc derivative + GDP-beta-L-fucose = an alpha-Neu5Ac-(2-&gt;3)-beta-D-Gal-(1-&gt;4)-beta-D-GlcNAc-(1-&gt;3)-beta-D-Gal-(1-&gt;4)-[alpha-L-Fuc-(1-&gt;3)]-beta-D-GlcNAc derivative + GDP + H(+). The enzyme catalyses alpha-N-glycoloylneuraminosyl-(2-&gt;3)-beta-D-galactosyl-(1-&gt;4)-N-acetyl-beta-D-glucosaminyl-(1-&gt;3)-beta-D-galactosyl-(1-&gt;4)-N-acetyl-beta-D-glucosaminyl-(1-&gt;3)-beta-D-galactosyl-(1-&gt;4)-beta-D-glucosyl-(1&lt;-&gt;1')-ceramide + GDP-beta-L-fucose = alpha-N-glycoloylneuraminosyl-(2-&gt;3)-beta-D-galactosyl-(1-&gt;4)-N-acetyl-beta-D-glucosaminyl-(1-&gt;3)-beta-D-galactosyl-(1-&gt;4)-[alpha-L-fucosyl-(1-&gt;3)]-N-acetyl-beta-D-glucosaminyl-(1-&gt;3)-beta-D-galactosyl-(1-&gt;4)-beta-D-glucosyl-(1&lt;-&gt;1')-ceramide + GDP + H(+). The catalysed reaction is alpha-D-galactosyl-(1-&gt;3)-beta-D-galactosyl-(1-&gt;4)-N-acetyl-beta-D-glucosaminyl-(1-&gt;3)-beta-D-galactosyl-(1-&gt;4)-beta-D-glucosyl-(1&lt;-&gt;1')-ceramide + GDP-beta-L-fucose = a neolactoside IV(3)-alpha-Gal,III(3)-alpha-Fuc-nLc4Cer + GDP + H(+). It catalyses the reaction a neolactoside nLc4Cer + GDP-beta-L-fucose = a neolactoside III(3)-alpha-Fuc-nLc4Cer + GDP + H(+). It carries out the reaction an N-acetyl-alpha-neuraminyl-(2-&gt;3)-beta-D-galactosyl-(1-&gt;4)-N-acetyl-beta-D-glucosaminyl derivative + GDP-beta-L-fucose = an alpha-Neu5Ac-(2-&gt;3)-beta-D-Gal-(1-&gt;4)-[alpha-L-Fuc-(1-&gt;3)]-beta-D-GlcNAc derivative + GDP + H(+). The enzyme catalyses beta-D-Gal-(1-&gt;4)-beta-D-GlcNAc-(1-&gt;3)-beta-D-Gal-(1-&gt;4)-D-Glc + GDP-beta-L-fucose = beta-D-Gal-(1-&gt;4)-[alpha-L-Fuc-(1-&gt;3)]-beta-D-GlcNAc-(1-&gt;3)-beta-D-Gal-(1-&gt;4)-D-Glc + GDP + H(+). The catalysed reaction is an alpha-L-Fuc-(1-&gt;2)-beta-D-Gal-(1-&gt;4)-beta-D-GlcNAc derivative + GDP-beta-L-fucose = an alpha-L-Fuc-(1-&gt;2)-beta-D-Gal-(1-&gt;4)-[alpha-L-Fuc-(1-&gt;3)]-beta-D-GlcNAc derivative + GDP + H(+). It functions in the pathway protein modification; protein glycosylation. It participates in glycolipid biosynthesis. With respect to regulation, activated by Mn2+. In terms of biological role, catalyzes alpha(1-&gt;3) linkage of fucosyl moiety transferred from GDP-beta-L-fucose to N-acetyl glucosamine (GlcNAc) within type 2 lactosamine (LacNAc, beta-D-Gal-(1-&gt;4)-beta-D-GlcNAc-) glycan attached to glycolipids and N- or O-linked glycoproteins. Fucosylates distal type 2 LacNAc and its fucosylated (H-type 2 LacNAc) and sialylated (sialyl-type 2 LacNAc) derivatives to form Lewis x (Lex) (CD15) and Lewis y (Ley) antigenic epitopes involved in cell adhesion and differentiation. Generates Lex epitopes in the brain, presumably playing a role in the maintenance of neuronal stemness and neurite outgrowth in progenitor neural cells. Fucosylates the internal type 2 LacNAc unit of the polylactosamine chain to form VIM-2 antigen that serves as recognition epitope for SELE. Can also modify milk oligosaccharides in particular type 2 tetrasaccharide LNnT. In Canis lupus familiaris (Dog), this protein is 4-galactosyl-N-acetylglucosaminide 3-alpha-L-fucosyltransferase 9.